The chain runs to 987 residues: Ephrin type-B receptor 4 (987 aa).

The signal sequence occupies residues 1–15; sequence MELRALLCWASLATA. The Extracellular segment spans residues 16 to 539; sequence LEETLLNTKL…ESESWREQLA (524 aa). Positions 17 to 202 constitute an Eph LBD domain; it reads EETLLNTKLE…FYKKCSWLIT (186 aa). Cystine bridges form between C61–C184 and C97–C107. N-linked (GlcNAc...) asparagine glycans are attached at residues N203, N335, and N426. Fibronectin type-III domains are found at residues 323–432 and 436–529; these read PPSA…TDRE and AVSD…TQLD. Residues 540–560 traverse the membrane as a helical segment; that stretch reads LIAGTAVVGVVLVLVVVIIAV. At 561–987 the chain is on the cytoplasmic side; that stretch reads LCLRKQSNGR…GGTGGPAQQF (427 aa). Residues 615 to 899 form the Protein kinase domain; sequence VKIEEVIGAG…ENGGASHPLL (285 aa). Residues 621–629 and K647 contribute to the ATP site; that span reads IGAGEFGEV. Catalysis depends on D740, which acts as the Proton acceptor. Phosphoserine occurs at positions 769, 770, 911, and 943. Positions 907 to 971 constitute an SAM domain; it reads SAFGSVGEWL…LASVQHMKSQ (65 aa). A disordered region spans residues 965–987; it reads VQHMKSQAKPGAPGGTGGPAQQF. The segment covering 976-987 has biased composition (gly residues); that stretch reads APGGTGGPAQQF. The short motif at 985–987 is the PDZ-binding element; that stretch reads QQF.

The protein belongs to the protein kinase superfamily. Tyr protein kinase family. Ephrin receptor subfamily. As to quaternary structure, heterotetramer upon binding of the ligand. The heterotetramer is composed of an ephrin dimer and a receptor dimer. Oligomerization is probably required to induce biological responses. Interacts with RASA1; the interaction depends on EPHB4 tyrosine-phosphorylation. Post-translationally, phosphorylated; autophosphorylation is stimulated by EFNB2. In terms of tissue distribution, expressed in various organ systems, including lung, liver, kidney, intestine, muscle and heart. Expressed in myogenic progenitor cells.

It is found in the cell membrane. It carries out the reaction L-tyrosyl-[protein] + ATP = O-phospho-L-tyrosyl-[protein] + ADP + H(+). In terms of biological role, receptor tyrosine kinase which binds promiscuously transmembrane ephrin-B family ligands residing on adjacent cells, leading to contact-dependent bidirectional signaling into neighboring cells. The signaling pathway downstream of the receptor is referred to as forward signaling while the signaling pathway downstream of the ephrin ligand is referred to as reverse signaling. Together with its cognate ligand/functional ligand EFNB2 it is involved in the regulation of cell adhesion and migration, and plays a central role in heart morphogenesis, angiogenesis and blood vessel remodeling and permeability. EPHB4-mediated forward signaling controls cellular repulsion and segregation from EFNB2-expressing cells. This chain is Ephrin type-B receptor 4 (Ephb4), found in Mus musculus (Mouse).